The primary structure comprises 426 residues: 3-phosphoshikimate 1-carboxyvinyltransferase (426 aa).

3-phosphoshikimate is bound by residues K22, S23, and R27. K22 contributes to the phosphoenolpyruvate binding site. Positions 96 and 124 each coordinate phosphoenolpyruvate. 3-phosphoshikimate-binding residues include S170, S171, Q172, S198, D314, N337, and K341. Q172 contributes to the phosphoenolpyruvate binding site. The active-site Proton acceptor is the D314. The phosphoenolpyruvate site is built by R345, R387, and K412.

It belongs to the EPSP synthase family. As to quaternary structure, monomer.

It localises to the cytoplasm. It carries out the reaction 3-phosphoshikimate + phosphoenolpyruvate = 5-O-(1-carboxyvinyl)-3-phosphoshikimate + phosphate. It functions in the pathway metabolic intermediate biosynthesis; chorismate biosynthesis; chorismate from D-erythrose 4-phosphate and phosphoenolpyruvate: step 6/7. In terms of biological role, catalyzes the transfer of the enolpyruvyl moiety of phosphoenolpyruvate (PEP) to the 5-hydroxyl of shikimate-3-phosphate (S3P) to produce enolpyruvyl shikimate-3-phosphate and inorganic phosphate. The chain is 3-phosphoshikimate 1-carboxyvinyltransferase from Shewanella halifaxensis (strain HAW-EB4).